The sequence spans 571 residues: Proline--tRNA ligase (571 aa).

Belongs to the class-II aminoacyl-tRNA synthetase family. ProS type 1 subfamily. Homodimer.

It is found in the cytoplasm. The enzyme catalyses tRNA(Pro) + L-proline + ATP = L-prolyl-tRNA(Pro) + AMP + diphosphate. Functionally, catalyzes the attachment of proline to tRNA(Pro) in a two-step reaction: proline is first activated by ATP to form Pro-AMP and then transferred to the acceptor end of tRNA(Pro). As ProRS can inadvertently accommodate and process non-cognate amino acids such as alanine and cysteine, to avoid such errors it has two additional distinct editing activities against alanine. One activity is designated as 'pretransfer' editing and involves the tRNA(Pro)-independent hydrolysis of activated Ala-AMP. The other activity is designated 'posttransfer' editing and involves deacylation of mischarged Ala-tRNA(Pro). The misacylated Cys-tRNA(Pro) is not edited by ProRS. The chain is Proline--tRNA ligase from Pasteurella multocida (strain Pm70).